Consider the following 224-residue polypeptide: Large ribosomal subunit protein uL1m (224 aa).

Belongs to the universal ribosomal protein uL1 family.

It is found in the mitochondrion. This Reclinomonas americana protein is Large ribosomal subunit protein uL1m (RPL1).